An 80-amino-acid polypeptide reads, in one-letter code: Phycocyanin-645 alpha-1 chain (80 aa).

R16 serves as a coordination point for (2R,3E)-phycocyanobilin. Mesobiliverdin is bound by residues C18, Q24, Y25, and K40. 15,16-dihydrobiliverdin-binding residues include P71 and I73.

Belongs to the phycoerythrin family. Heterotetramer of 2 different alpha chains and 2 identical beta chains which form 2 alpha-beta heterodimers within the heterotetramer. Contains one phycocyanobilin chromophore, one mesobiliverdin chromophore and one 15,16-dihydrobiliverdin chromophore with binding mediated by both the alpha and beta subunits.

It localises to the plastid. Its subcellular location is the chloroplast thylakoid membrane. Its function is as follows. Light-harvesting photosynthetic tetrapyrrole chromophore-protein from the phycobiliprotein complex. This Chroomonas sp protein is Phycocyanin-645 alpha-1 chain.